The sequence spans 580 residues: Trafficking protein particle complex subunit 14 (580 aa).

2 disordered regions span residues 95–134 (GSAG…TSGG) and 480–533 (VSHP…RSGS). The segment covering 105 to 116 (PGGGDPGGGGLF) has biased composition (gly residues). At serine 491 the chain carries Phosphoserine. Low complexity predominate over residues 492–502 (RKSSPSSPAVR). Polar residues predominate over residues 512-525 (LGRSQSFSHQQPSR). Serine 517 is modified (phosphoserine). Position 541 is a phosphothreonine (threonine 541). Serine 546 is subject to Phosphoserine.

As to quaternary structure, component of the multisubunit TRAPP II complex, which includes at least TRAPPC1, TRAPPC2, TRAPPC2L, TRAPPC3, TRAPPC4, TRAPPC5, TRAPPC6A/B, TRAPPC9, TRAPPC10 and TRAPPC14. TRAPPC9, TRAPPC10 and TRAPPC14 are specific subunits of the TRAPP II complex. Interacts with alpha-tubulin during mitosis. Interacts with RAB3IP (via the N-terminal region); this interaction mediates RAB3IP association with the TRAPP II complex. Interacts with TRAPPC10. Interacts with FBF1.

It is found in the cytoplasm. The protein localises to the cytoskeleton. Its subcellular location is the spindle. The protein resides in the vesicle. It localises to the midbody. In terms of biological role, specific subunit of the TRAPP (transport protein particle) II complex, a highly conserved vesicle tethering complex that functions in late Golgi trafficking as a membrane tether. TRAPPC14 is dispensable for TRAPPII complex integrity but mediates RAB3IP preciliary vesicle trafficking to the mother centriole during ciliogenesis. Modulates YAP1 activity as transcriptional regulator. The protein is Trafficking protein particle complex subunit 14 of Mus musculus (Mouse).